The sequence spans 563 residues: Putative solute carrier family 26 member 10P (563 aa).

The next 5 helical transmembrane spans lie at alanine 45 to isoleucine 65, leucine 75 to valine 91, valine 116 to leucine 136, alanine 152 to leucine 172, and leucine 352 to phenylalanine 372. Residues arginine 406–alanine 541 enclose the STAS domain.

Belongs to the SLC26A/SulP transporter (TC 2.A.53) family.

The protein resides in the membrane. Its function is as follows. Chloride/bicarbonate exchanger. The chain is Putative solute carrier family 26 member 10P (SLC26A10P) from Homo sapiens (Human).